A 154-amino-acid chain; its full sequence is Aspartate carbamoyltransferase regulatory chain (154 aa).

The Zn(2+) site is built by cysteine 109, cysteine 114, cysteine 138, and cysteine 141.

This sequence belongs to the PyrI family. As to quaternary structure, contains catalytic and regulatory chains. Zn(2+) serves as cofactor.

Its function is as follows. Involved in allosteric regulation of aspartate carbamoyltransferase. The polypeptide is Aspartate carbamoyltransferase regulatory chain (Photorhabdus laumondii subsp. laumondii (strain DSM 15139 / CIP 105565 / TT01) (Photorhabdus luminescens subsp. laumondii)).